The following is a 359-amino-acid chain: MNIYDQLQAVEDRYEELGELLSDPDVVSDTKRFMELSREEANTRETVTAYREYKQVIQTISDAEEMIKDASGDPELEEMAKEELKESKAAKEEYEEKLKILLLPKDPNDDKNIILEIRGAAGGDEAALFAGDLLTMYQKYAETQGWRFEVMESSVNGVGGIKEVVAMVSGQSVYSKLKYESGAHRVQRVPVTESQGRVHTSTATVLVMPEVEEVEYDIDPKDLRVDIYHASGAGGQNVNKVATAVRMVHIPTGIKVEMQEERTQQKNRDKAMKIIRARVADHFAQIAQDEQDAERKSTVGTGDRSERIRTYNFPQNRVTDHRIGLTLQKLDTILSGKMNEVIDALVMYDQTKKLESLNN.

N5-methylglutamine is present on Gln-236.

Belongs to the prokaryotic/mitochondrial release factor family. Post-translationally, methylated by PrmC. Methylation increases the termination efficiency of RF1.

It localises to the cytoplasm. Peptide chain release factor 1 directs the termination of translation in response to the peptide chain termination codons UAG and UAA. In Streptococcus pyogenes serotype M6 (strain ATCC BAA-946 / MGAS10394), this protein is Peptide chain release factor 1.